We begin with the raw amino-acid sequence, 273 residues long: Putative phosphoenolpyruvate synthase regulatory protein (273 aa).

ADP is bound at residue 153–160 (AVSRAGKT).

Belongs to the pyruvate, phosphate/water dikinase regulatory protein family. PSRP subfamily.

It carries out the reaction [pyruvate, water dikinase] + ADP = [pyruvate, water dikinase]-phosphate + AMP + H(+). The catalysed reaction is [pyruvate, water dikinase]-phosphate + phosphate + H(+) = [pyruvate, water dikinase] + diphosphate. Functionally, bifunctional serine/threonine kinase and phosphorylase involved in the regulation of the phosphoenolpyruvate synthase (PEPS) by catalyzing its phosphorylation/dephosphorylation. This Stenotrophomonas maltophilia (strain R551-3) protein is Putative phosphoenolpyruvate synthase regulatory protein.